A 247-amino-acid polypeptide reads, in one-letter code: Vacuolar iron transporter 1 (247 aa).

Residues 1 to 33 lie on the Cytoplasmic side of the membrane; sequence MVIAGVSPPTPSSENLLQEHEEKHFTATDVVRD. A helical transmembrane segment spans residues 34-54; it reads VIIGVSDGLTVPFALAAGLSG. The Vacuolar segment spans residues 55–60; it reads ANVPSS. A helical membrane pass occupies residues 61–81; the sequence is LILTAGIAEVAAGAISMGLGG. Residues 82-167 are Cytoplasmic-facing; it reads YLAAKSEEDH…PRRALESAMT (86 aa). The Fe cation site is built by glutamate 99, glutamate 102, glutamate 110, glutamate 113, methionine 146, and glutamate 150. Residues 168–188 traverse the membrane as a helical segment; sequence IALAYVVGGLVPLSPYFFIPF. Residues 189 to 191 lie on the Vacuolar side of the membrane; that stretch reads AKQ. The helical transmembrane segment at 192–212 threads the bilayer; the sequence is AMITSIAVTLLALVVFGYIKG. Residues 213-219 lie on the Cytoplasmic side of the membrane; that stretch reads RFTGSNP. The helical transmembrane segment at 220–240 threads the bilayer; sequence VLSSIQTAIIGALASAAAYAM. Topologically, residues 241-247 are vacuolar; sequence AKAVQSV.

It belongs to the CCC1 family. As to expression, expressed at high levels in the blue epidermal cells of the inner bottom part of the petal (at protein level). No detectable expression in parenchyma and epidermis of the purple segments of the petal, parenchyma of the blue segments, leaf, stem, bulb and root (at protein level). High levels of mRNA in the blue epidermal cells of the inner bottom part of the petal. Low-levels of mRNA in the purple segments of the petal, stem, leaf, root, bulb and pistil.

The protein resides in the vacuole membrane. The catalysed reaction is Fe(2+)(in) = Fe(2+)(out). Vacuolar iron transporter involved in the transfer of iron ions from the cytosol to the vacuole for intracellular iron storage. Plays an essential role in the development of blue coloration in tulip petals most likely due to the accumulation of ferrous ions that can form complexes with anthocyanins. This Tulipa gesneriana (Garden tulip) protein is Vacuolar iron transporter 1.